A 700-amino-acid polypeptide reads, in one-letter code: Pentatricopeptide repeat-containing protein 1, mitochondrial (700 aa).

Residues 49 to 93 (SSSQLPLGQERQENTGSLGSDPSHSNSTATQEEDEEEEESFGTLS) are disordered. The segment covering 62–78 (NTGSLGSDPSHSNSTAT) has biased composition (polar residues). Residues 79 to 88 (QEEDEEEEES) show a composition bias toward acidic residues. PPR repeat units lie at residues 135–171 (TPYW…RLQP), 172–206 (MESN…DLEP), 207–245 (SDAT…NFEL), 246–280 (NLKT…GHVV), 281–317 (TEET…GLQP), and 318–354 (SRDS…ATVL). Positions 393-414 (SQALGPPEPPEARVPGKAQPEV) are disordered. 3 PPR repeats span residues 519-553 (DLTF…GLVP), 554-585 (NLQT…QVTP), and 586-620 (NTHI…RVPV). Residues 672–700 (HPWQKFRTKPQGDQDTGKEADDGCALGGR) form a disordered region. The span at 681–692 (PQGDQDTGKEAD) shows a compositional bias: basic and acidic residues.

The protein belongs to the PTCD1 family. Associates with mitochondrial leucine tRNAs. Interacts with ELAC2. Abundant in testes, skeletal muscle and heart.

It localises to the mitochondrion. It is found in the mitochondrion matrix. In terms of biological role, mitochondrial protein implicated in negative regulation of leucine tRNA levels, as well as negative regulation of mitochondria-encoded proteins and COX activity. Also affects the 3'-processing of mitochondrial tRNAs. In Homo sapiens (Human), this protein is Pentatricopeptide repeat-containing protein 1, mitochondrial (PTCD1).